A 3061-amino-acid polypeptide reads, in one-letter code: MATYTSTIQIGSIECKLPYSPAPFGLVAGKREVSTTTDPFASLEMQLSARLRRQEFATIRTSKNGTCMYRYKTDAQIARIQKKREEREREEYNFQMAASSVVSKITIAGGEPPSKLESQVRKGVIHTTPRMRTAKTYRTPKLTEGQMNHLIKQVKQIMSTKGGSVQLISKKSTHVHYKEVLGSHRAVVCTAHMRGLRKRVDFRCDKWTVVRLQHLARTDKWTNQVRATDLRKGDSGVILSNTNLKGHFGRSSEGLFIVRGSHEGKIYDARSKVTQGVMDSMVQFSSAESFWEGLDGNWAQMRYPTDHTCVAGIPVEDCGRVAAIMTHSILPCYKITCPTCAQQYANLPASDLLKILHKHASDGLNRLGADKDRFVHVKKFLTILEHLTEPVDLSLEIFNEVFKSIGEKQQSPFKNLNILNNFFLKGKENTAREWQVAQLSLLELARFQKNRTDNIKKGDISFFRNKLSAKANWNLYLSCDNQLDKNANFLWGQREYHAKRFFSNYFEEIDPAKGYSAYENRLHPNGTRKLAIGNLIVPLDLAEFRRKMKGDYKRQPGVSKKCTSSKDGNYVYPCCCTTLDDGSAVESTFYPPTKKHLVIGNSGDQKYVDLPKGNSEMLYIARQGFCYINIFLAMLINISEEDAKDFTKKVRDMCVPKLGTWPTMMDLATTCAQMKIFYPDVHDAELPRILVDHETQTCHVVDSFGSQTTGYHILKASSVSQLILFANDELESDIKHYRVGGIPNACPELGSTISPFREGGVIMSESAALKLLLKGIFRPKVMRQLLLDEPYLLILSILSPGILMAMYNNGIFELAVKLWINEKQSIAMIASLLSALALRVSAAETLVAQRIIIDTAATDLLDATCDGFNLHLTYPTALMVLQVVKNRNECDDTLFKAGFPSYNTSVVQIMEKNYLNLLNDAWKDLTWREKLSATWYSYRAKRSITRYIKPTGRADLKGLYNISPQAFLGRGAQVVKGTASGLSERFNNYFNTKCVNISSFFIRRIFRRLPTFVTFVNSLLVISMLTSVVAVCQAIILDQRKYRREIELMQIEKNEIVCMELYASLQRKLERDFTWDEYIEYLKSVNPQIVQFAQAQMEEYDVRHQRSTPGVKNLEQVVAFMALVIMVFDAERSDCVFKTLNKFKGVLSSLDHEVRHQSLDDVIKNFDERNETIDFELSEDTIRTSSVLDTKFSDWWDRQIQMGHTLPHYRTEGHFMEFTRATAVQVANDIAHSEHLDFLVRGAVGSGKSTGLPVHLSVAGSVLLIEPTRPLAENVFKQLSSEPFFKKPTLRMRGNSIFGSSPISVMTSGFALHYFANNRSQLAQFNFVIFDECHVLDPSAMAFRSLLSVYHQACKVLKVSATPVGREVEFTTQQPVKLIVEDTLSFQSFVDAQGSKTNADVVQFGSNVLVYVSSYNEVDTLAKLLTDKNMMVTKVDGRTMKHGCLEIVTRGTSARPHFVVATNIIENGVTLDIDVVVDFGLKVSPFLDIDNRSIAYNKVSVSYGERIQRLGRVGRFKKGVALRIGHTEKGIIENPSMIATEAALACFAYNLPVMTGGVSTSLIGNCTVRQVKTMQQFELSPFFIQNFVAHDGSMHPVIHDILKKYKLRDCMTPLCDQSIPYRASSTWLSVSEYERLGVALEIPKQVKIAFHIKEIPPKLHEMLWETVVKYKDVCLFPSIRASSISKIAYTLRTDLFAIPRTLILVERLLEEERVKQSQFRSLIDEGCSSMFSIVNLTNTLRARYAKDYTAENIQKLEKVRSQLKEFSNLDGSACEENLIKRYESLQFVHHQAATSLAKDLKLKGTWKKSLVAKDLIIAGAVAIGGIGLIYSWFTQSVETVSHQGKNKSKRIQALKFRHARDKRAGFEIDNNDDTIEEFFGSAYRKKGKGKGTTVGMGKSSRRFVNMYGFDPTEYSFIQFVDPLTGAQIEENVYADIRDIQERFSDVRKKMVEDDEIELQALGSNTTIHAYFRKDWSDKALKIDLMPHNPLKICDKSNGIAKFPERELELRQTGPAIEVDVKDIPKQEVEHEAKSLMRGLRDFNPIAQTVCRVKVSAEYGTSEMYGFGFGAYIIVNHHLFKSFNGSMEVRSMHGTFRVKNLHSLSVLPIKGRDIIIIKMPKDFPVFPQKLHFRAPVQNERICLVGTNFQEKHASSIITETSTTYNVPGSTFWKHWIETNDGHCGLPVVSTADGCLVGIHSLANNVQTTNYYSAFDEDFESKYLRTNEHNEWTKSWVYNPDTVLWGPLKLKESTPKGLFKTTKLVQDLIDHDVVVEQAKHSAWMYEALTGNLQAVATMKSQLVTKHVVKGECRHFKEFLTVDSEAEAFFRPLMDAYGKSLLNREAYIKDIMKYSKPIDVGIVDCDAFEEAINRVIIYLQVHGFQKCNYITDEQEIFKALNMKAAVGAMYGGKKKDYFEHFTEADKEEIVMQSCPRLYKGSLGIWNGSLKAELRCKEKILANKTRTFTAAPLDTLLGGKVCVDDFNNQFYSKNIECCWTVGMTKFYGGWDRLLRRLPENWVYCDADGSQFDSSLTPYLINAVLIIRSTYMEDWDLGLQMLRNLYTEIIYTPISTPDGTIVKKFRGNNSGQPSTVVDNSLMVVLAMHYALIKECVEFEEIDSTCVFFVNGDDLLIAVNPEKESILDRMSQHFSDLGLNYDFSSRTRRKEELWFMSHRGLLIEGMYVPKLEEERIVSILQWDRADLPEHRLEAICAAMIESWGYSELTHQIRRFYSWLLQQQPFSTIAQEGKAPYIASMALKKLYMNRTVDEEELKAFTEMMVALDDELECDTYEVHHQGNDTIDAGGSTKKDAKQEQGSIQPNLNKEKEKDVNVGTSGTHTVPRIKAITSKMRMPKSKGAAVLNLKHLLEYAPQQIDISNTRATQSQFDTWYEAVQLAYDIGETEMPTVMNGLMVWCIENGTSPNINGVWVMMDGDEQVEYPLKPIVENAKPTLRQIMAHFSDVAEAYIEMRNKKEPYMPRYGLVRNLRDGSLARYAFDFYEVTSRTPVRAREAHIQMKAAALKSAQSRLFGLDGGISTQEENTERHTTEDVSPSMHTLLGVKNM.

The 144-residue stretch at 141-284 (KLTEGQMNHL…QGVMDSMVQF (144 aa)) folds into the Peptidase S30 domain. Active-site for P1 proteinase activity residues include H192, D201, and S235. The Involved in interaction with stylet and aphid transmission motif lies at 334–337 (KITC). Positions 592 to 594 (PTK) match the Involved in virions binding and aphid transmission motif. The 123-residue stretch at 618-740 (LYIARQGFCY…ESDIKHYRVG (123 aa)) folds into the Peptidase C6 domain. Catalysis depends on for helper component proteinase activity residues C626 and H699. The region spanning 1229–1381 (DIAHSEHLDF…TQQPVKLIVE (153 aa)) is the Helicase ATP-binding domain. 1242–1249 (GAVGSGKS) provides a ligand contact to ATP. The DECH box signature appears at 1331-1334 (DECH). The 160-residue stretch at 1400-1559 (DVVQFGSNVL…NLPVMTGGVS (160 aa)) folds into the Helicase C-terminal domain. The Nuclear localization signal motif lies at 1884–1892 (RKKGKGKGT). Y1907 carries the O-(5'-phospho-RNA)-tyrosine modification. The Peptidase C4 domain maps to 2032–2250 (AKSLMRGLRD…VLWGPLKLKE (219 aa)). Catalysis depends on for nuclear inclusion protein A activity residues H2077, D2112, and C2182. Residues 2517-2641 (WVYCDADGSQ…AVNPEKESIL (125 aa)) enclose the RdRp catalytic domain. The disordered stretch occupies residues 2795-2835 (GNDTIDAGGSTKKDAKQEQGSIQPNLNKEKEKDVNVGTSGT). A Phosphothreonine modification is found at T3044.

Belongs to the potyviridae genome polyprotein family. In terms of assembly, interacts with host eIF4E protein (via cap-binding region); this interaction mediates the translation of the VPg-viral RNA conjugates. Part of a complex that comprises VPg, RNA, host EIF4E and EIF4G; this interaction mediates the translation of the VPg-viral RNA conjugates. VPg is uridylylated by the polymerase and is covalently attached to the 5'-end of the genomic RNA. This uridylylated form acts as a nucleotide-peptide primer for the polymerase. In terms of processing, potyviral RNA is expressed as two polyproteins which undergo post-translational proteolytic processing. Genome polyprotein is processed by NIa-pro, P1 and HC-pro proteinases resulting in the production of at least ten individual proteins. P3N-PIPO polyprotein is cleaved by P1 and HC-pro proteinases resulting in the production of three individual proteins. The P1 proteinase and the HC-pro cleave only their respective C-termini autocatalytically. 6K1 is essential for proper proteolytic separation of P3 from CI.

It is found in the host cytoplasmic vesicle. The protein resides in the host nucleus. Its subcellular location is the virion. The enzyme catalyses RNA(n) + a ribonucleoside 5'-triphosphate = RNA(n+1) + diphosphate. The catalysed reaction is Hydrolyzes glutaminyl bonds, and activity is further restricted by preferences for the amino acids in P6 - P1' that vary with the species of potyvirus, e.g. Glu-Xaa-Xaa-Tyr-Xaa-Gln-|-(Ser or Gly) for the enzyme from tobacco etch virus. The natural substrate is the viral polyprotein, but other proteins and oligopeptides containing the appropriate consensus sequence are also cleaved.. It catalyses the reaction Hydrolyzes a Gly-|-Gly bond at its own C-terminus, commonly in the sequence -Tyr-Xaa-Val-Gly-|-Gly, in the processing of the potyviral polyprotein.. Required for aphid transmission and also has proteolytic activity. Only cleaves a Gly-Gly dipeptide at its own C-terminus. Interacts with virions and aphid stylets. Acts as a suppressor of RNA-mediated gene silencing, also known as post-transcriptional gene silencing (PTGS), a mechanism of plant viral defense that limits the accumulation of viral RNAs. May have RNA-binding activity. Its function is as follows. Has helicase activity. It may be involved in replication. In terms of biological role, indispensable for virus replication. Reduces the abundance of host transcripts related to jasmonic acid biosynthesis therefore altering the host defenses. In order to increase its own stability, decreases host protein degradation pathways. Functionally, indispensable for virus replication. Mediates the cap-independent, EIF4E-dependent translation of viral genomic RNAs. Binds to the cap-binding site of host EIF4E and thus interferes with the host EIF4E-dependent mRNA export and translation. VPg-RNA directly binds EIF4E and is a template for transcription. Also forms trimeric complexes with EIF4E-EIF4G, which are templates for translation. Its function is as follows. Has RNA-binding and proteolytic activities. In terms of biological role, an RNA-dependent RNA polymerase that plays an essential role in the virus replication. Functionally, involved in aphid transmission, cell-to-cell and systemis movement, encapsidation of the viral RNA and in the regulation of viral RNA amplification. This is Genome polyprotein from Potato virus Y (strain Hungarian) (PVY).